The following is a 364-amino-acid chain: Chaperone protein DnaJ (364 aa).

A J domain is found at 4–69 (DYYEILGLSK…NKKAKYDRFG (66 aa)). The CR-type zinc-finger motif lies at 135–213 (GYKNNINITR…CKGKGRITNQ (79 aa)). Zn(2+) is bound by residues cysteine 148, cysteine 151, cysteine 165, cysteine 168, cysteine 187, cysteine 190, cysteine 201, and cysteine 204. CXXCXGXG motif repeat units lie at residues 148–155 (CHSCLGKK), 165–172 (CNMCNGSG), 187–194 (CSKCYGEG), and 201–208 (CKSCKGKG).

This sequence belongs to the DnaJ family. As to quaternary structure, homodimer. The cofactor is Zn(2+).

The protein resides in the cytoplasm. In terms of biological role, participates actively in the response to hyperosmotic and heat shock by preventing the aggregation of stress-denatured proteins and by disaggregating proteins, also in an autonomous, DnaK-independent fashion. Unfolded proteins bind initially to DnaJ; upon interaction with the DnaJ-bound protein, DnaK hydrolyzes its bound ATP, resulting in the formation of a stable complex. GrpE releases ADP from DnaK; ATP binding to DnaK triggers the release of the substrate protein, thus completing the reaction cycle. Several rounds of ATP-dependent interactions between DnaJ, DnaK and GrpE are required for fully efficient folding. Also involved, together with DnaK and GrpE, in the DNA replication of plasmids through activation of initiation proteins. This is Chaperone protein DnaJ from Borrelia garinii subsp. bavariensis (strain ATCC BAA-2496 / DSM 23469 / PBi) (Borreliella bavariensis).